The sequence spans 188 residues: Cytidylate kinase (188 aa).

7–15 (GKIGSGKST) contributes to the ATP binding site.

The protein belongs to the cytidylate kinase family. Type 2 subfamily.

Its subcellular location is the cytoplasm. The catalysed reaction is CMP + ATP = CDP + ADP. The enzyme catalyses dCMP + ATP = dCDP + ADP. The polypeptide is Cytidylate kinase (cmk) (Thermoplasma acidophilum (strain ATCC 25905 / DSM 1728 / JCM 9062 / NBRC 15155 / AMRC-C165)).